The following is a 308-amino-acid chain: Cell division protein FtsQ (308 aa).

Residues 1 to 53 (MDSGGRIVYALNVEKTGFLRILSVTVLQRLYRRVFWFLFKCVAGIDVPRHAGS) lie on the Cytoplasmic side of the membrane. The chain crosses the membrane as a helical span at residues 54-74 (LAVFSFFFLSILYSISSGGYM). The Periplasmic segment spans residues 75-308 (NHFMKVAISN…LLKMLKAGSV (234 aa)). The 69-residue stretch at 87–155 (FLVTHVDMSG…DRLRISLVER (69 aa)) folds into the POTRA domain.

The protein belongs to the FtsQ/DivIB family. FtsQ subfamily.

Its subcellular location is the cell inner membrane. Functionally, essential cell division protein. The chain is Cell division protein FtsQ from Bartonella bacilliformis.